A 112-amino-acid chain; its full sequence is Thyroid transcription factor 1 (112 aa).

Positions 1-60 (RRNRRVLFSQAQVYELERRFKQQKYLSAPEREHLASMIHLTPTQVKIWFQNHRYKMKRQA) form a DNA-binding region, homeobox. A disordered region spans residues 59–100 (QAKDKAAQQQLQQDSGGGGGGGGAGCPQQQQAQQQSPRRVAV). Positions 73–83 (SGGGGGGGGAG) are enriched in gly residues. Residues 84–93 (CPQQQQAQQQ) are compositionally biased toward low complexity.

This sequence belongs to the NK-2 homeobox family. Post-translationally, phosphorylated on serine residues.

The protein localises to the nucleus. Its function is as follows. Transcription factor that binds and activates the promoter of thyroid specific genes such as thyroglobulin, thyroperoxidase, and thyrotropin receptor. Crucial in the maintenance of the thyroid differentiation phenotype. May play a role in lung development and surfactant homeostasis. The chain is Thyroid transcription factor 1 (TITF1) from Cavia porcellus (Guinea pig).